The primary structure comprises 218 residues: Glutathione S-transferase D7 (218 aa).

Positions 1 to 82 constitute a GST N-terminal domain; that stretch reads MTPVLYYLPP…YLVSAYGKDE (82 aa). Glutathione is bound by residues Ser11, 52–54, and 66–68; these read HCI and ESR. The GST C-terminal domain maps to 88–207; the sequence is DFRSRAIVDQ…KEINETGAET (120 aa).

It belongs to the GST superfamily. Theta family. As to quaternary structure, homodimer.

The catalysed reaction is RX + glutathione = an S-substituted glutathione + a halide anion + H(+). Functionally, conjugation of reduced glutathione to a wide number of exogenous and endogenous hydrophobic electrophiles. In Anopheles gambiae (African malaria mosquito), this protein is Glutathione S-transferase D7.